Here is an 805-residue protein sequence, read N- to C-terminus: Muscarinic acetylcholine receptor DM1 (805 aa).

Topologically, residues 1-100 (MEPVMSLALA…GFETKGPRYS (100 aa)) are extracellular. Residues 27-43 (TSTTTTTTTTTSTTTTT) show a composition bias toward low complexity. The disordered stretch occupies residues 27–47 (TSTTTTTTTTTSTTTTTASPA). N65, N84, and N87 each carry an N-linked (GlcNAc...) asparagine glycan. The chain crosses the membrane as a helical span at residues 101 to 121 (LASMVVMGFVAAILSTVTVAG). Over 122 to 141 (NVMVMISFKIDKQLQTISNY) the chain is Cytoplasmic. The helical transmembrane segment at 142 to 162 (FLFSLAIADFAIGAISMPLFA) threads the bilayer. Residues 163–177 (VTTILGYWPLGPIVC) are Extracellular-facing. A helical transmembrane segment spans residues 178–198 (DTWLALDYLASNASVLNLLII). The Cytoplasmic segment spans residues 199 to 220 (SFDRYFSVTRPLTYRAKRTTNR). The helical transmembrane segment at 221-241 (AAVMIGAAWGISLLLWPPWIY) threads the bilayer. Residues 242 to 266 (SWPYIEGKRTVPKDECYIQFIETNQ) lie on the Extracellular side of the membrane. A helical transmembrane segment spans residues 267 to 287 (YITFGTALAAFYFPVTIMCFL). Topologically, residues 288 to 718 (YWRIWRETKK…KRQESKAAKT (431 aa)) are cytoplasmic. Disordered regions lie at residues 302–322 (LPNLQAGKKDSSKRSNSSDEN), 340–359 (GNDHDTWRRPRSESSPDAES), and 507–530 (GNGNGAINNNNNASHNGNGAVNGN). Composition is skewed to basic and acidic residues over residues 308–318 (GKKDSSKRSNS) and 341–353 (NDHDTWRRPRSES). A compositionally biased stretch (low complexity) spans 507-525 (GNGNGAINNNNNASHNGNG). A helical membrane pass occupies residues 719–739 (LSAILLSFIITWTPYNILVLI). The Extracellular segment spans residues 740–752 (KPLTTCSDCIPTE). A helical transmembrane segment spans residues 753-773 (LWDFFYALCYINSTINPMCYA). Residues 774 to 805 (LCNATFRRTYVRILTCKWHTRNREGMVRGVYN) are Cytoplasmic-facing.

Belongs to the G-protein coupled receptor 1 family. Muscarinic acetylcholine receptor subfamily. In terms of tissue distribution, intense staining in the glomeruli of the antennal lobes, the region of the nervous system containing terminals of antennal olfactory sensory neurons and mechanosensory neurons. Also a discrete group of neurosecretory cells in the pars intercerebralis of the brain.

It localises to the cell membrane. Its subcellular location is the postsynaptic cell membrane. The muscarinic acetylcholine receptor mediates various cellular responses, including inhibition of adenylate cyclase, breakdown of phosphoinositides and modulation of potassium channels through the action of G proteins. Primary transducing effect is Pi turnover. May have a role in the processing of olfactory and mechanosensory signals; regulation of neurosecretion. This chain is Muscarinic acetylcholine receptor DM1 (mAChR-A), found in Drosophila melanogaster (Fruit fly).